Consider the following 304-residue polypeptide: Calcium release-activated calcium channel protein 1 (304 aa).

The span at Met1–His11 shows a compositional bias: pro residues. Residues Met1–Pro50 form a disordered region. The Cytoplasmic portion of the chain corresponds to Met1–Lys89. The required for generation of inwardly rectifying CRAC currents stretch occupies residues Pro3–Pro49. The span at Ser12 to Ser27 shows a compositional bias: low complexity. Residues Pro39–Ser61 form an AKAP5 association region region. Residues Gly41 to Pro50 show a composition bias toward pro residues. Residues Ser72–Ser92 are interaction with STIM1. A helical transmembrane segment spans residues Ala90–Val107. Residues Glu108 to Leu121 lie on the Extracellular side of the membrane. Residues Leu122 to Ile142 traverse the membrane as a helical segment. The Cytoplasmic segment spans residues Ser143 to Glu175. A helical membrane pass occupies residues Leu176 to Leu196. Over Cys197–Ala237 the chain is Extracellular. Asn225 carries N-linked (GlcNAc...) asparagine glycosylation. A helical transmembrane segment spans residues Ala238–Val258. Over His259 to Ala304 the chain is Cytoplasmic. The interaction with STIM1 stretch occupies residues Glu275–His295. Thr298 carries the post-translational modification Phosphothreonine.

This sequence belongs to the Orai family. In terms of assembly, oligomerizes in homomeric and heteromeric ORAI complexes. Native CRAC channels most likely consist of hexameric ORAI heteromers, implying that diverse ORAI1, ORAI2 and ORAI3 subunit combinations with distinct biophysical properties can operate in a cell-type specific way. ARC channels are heteropentamers consisting of three ORAI1 and two ORAI3 subunits. Interacts with STIM1 and STIM2; this regulates channel activity. Interacts with CALM; this may displace STIM1 and STIM2 and might thereby modulate channel activity. Interacts (via N-terminus) with AKAP5 upon store depletion. Interacts with CRACR2A/EFCAB4B; the interaction is direct and takes place in absence of Ca(2+). Forms a complex with CRACR2A/EFCAB4B and STIM1 at low concentration of Ca(2+), the complex dissociates at elevated Ca(2+) concentrations. Interacts with ASPH (isoform 8). Interacts with SLC35G1. Interacts with UBQLN1. Interacts with ADCY8; interaction is calcium store depletion independent; interaction occurs in membrane raft; interaction increases markedly after store depletion; positively regulates SOCE-induced adenylate cyclase activity; contributes to the targeting of ADCY8 to discrete regions of the plasma membrane that are shielded from other calcium events. Interacts with EFHB; the interaction takes place upon Ca(2+)-store depletion. Interacts (via N- and C-termini) with ATP2C2 (via N-terminus); this interaction regulates Ca(2+) influx at the plasma membrane. Interacts with TSPAN18; this interaction regulates ORAI1 exit from the endoplasmic (ER), and/or Golgi, and trafficking to the cell surface. N-glycosylated. N-glycosylation inhibits channel activity in T cells. Post-translationally, ubiquitinated. In terms of processing, cys-195 is oxidated, leading to inactivation of channel activity. Expressed in lactating mammary epithelium (at protein level).

The protein resides in the cell membrane. It is found in the basolateral cell membrane. It catalyses the reaction Ca(2+)(in) = Ca(2+)(out). With respect to regulation, oxidation at Cys-197 leads to inactivation of channel activity. Pore-forming subunit of two major inward rectifying Ca(2+) channels at the plasma membrane: Ca(2+) release-activated Ca(2+) (CRAC) channels and arachidonate-regulated Ca(2+)-selective (ARC) channels. Assembles with ORAI2 and ORAI3 to form hexameric CRAC channels that mediate Ca(2+) influx upon depletion of endoplasmic reticulum Ca(2+) store and channel activation by Ca(2+) sensor STIM1, a process known as store-operated Ca(2+) entry (SOCE). Various pore subunit combinations may account for distinct CRAC channel spatiotemporal and cell-type specific dynamics. ORAI1 mainly contributes to the generation of Ca(2+) plateaus involved in sustained Ca(2+) entry and is dispensable for cytosolic Ca(2+) oscillations, whereas ORAI2 and ORAI3 generate oscillatory patterns. CRAC channels assemble in Ca(2+) signaling microdomains where Ca(2+) influx is coupled to calmodulin and calcineurin signaling and activation of NFAT transcription factors recruited to ORAI1 via AKAP5. Activates NFATC2/NFAT1 and NFATC3/NFAT4-mediated transcriptional responses. CRAC channels are the main pathway for Ca(2+) influx in T cells and promote the immune response to pathogens by activating NFAT-dependent cytokine and chemokine transcription. Assembles with ORAI3 to form channels that mediate store-independent Ca(2+) influx in response to inflammatory metabolites arachidonate or its derivative leukotriene C4, termed ARC and LRC channels respectively. Plays a prominent role in Ca(2+) influx at the basolateral membrane of mammary epithelial cells independently of the Ca(2+) content of endoplasmic reticulum or Golgi stores. May mediate transepithelial transport of large quantities of Ca(2+) for milk secretion. This Mus musculus (Mouse) protein is Calcium release-activated calcium channel protein 1 (Orai1).